We begin with the raw amino-acid sequence, 308 residues long: Ribosomal RNA small subunit methyltransferase H (308 aa).

Residues 36-38, aspartate 55, phenylalanine 86, aspartate 103, and glutamine 110 each bind S-adenosyl-L-methionine; that span reads GGH.

Belongs to the methyltransferase superfamily. RsmH family.

The protein resides in the cytoplasm. It catalyses the reaction cytidine(1402) in 16S rRNA + S-adenosyl-L-methionine = N(4)-methylcytidine(1402) in 16S rRNA + S-adenosyl-L-homocysteine + H(+). Functionally, specifically methylates the N4 position of cytidine in position 1402 (C1402) of 16S rRNA. This is Ribosomal RNA small subunit methyltransferase H from Helicobacter pylori (strain G27).